We begin with the raw amino-acid sequence, 330 residues long: Cyclin N-terminal domain-containing protein 1 (330 aa).

A Cyclin N-terminal domain is found at 27–178 (DALLHLAQQN…VLKSLNFRIN (152 aa)).

Interacts with PRR19; this interaction promotes crossover formation. Interacts with RFC3 and RFC4; these interactions facilitate crossover formation. Interacts with CDC34; this interaction regulates the cell-cycle progression.

It localises to the nucleus. The protein localises to the cytoplasm. It is found in the chromosome. Its function is as follows. Plays a role in the different steps of crossover formation during meiotic recombination. Participates in the crossover differentiation step of crossover-specific recombination intermediates through its interaction with PRR19. In addition, stimulates crossover formation through the interactions with RFC3 and RFC4 and simultaneously regulates cell-cycle progression through interactions with CDC34 and subsequent ubiquitination of WEE1. May also participates in an active deselection process that destabilizes or removes excess pre-CO intermediates. In Homo sapiens (Human), this protein is Cyclin N-terminal domain-containing protein 1.